A 283-amino-acid chain; its full sequence is Putative 4-diphosphocytidyl-2-C-methyl-D-erythritol kinase (283 aa).

Residue Lys-11 is part of the active site. 95-105 (PVCAGMGGGSS) serves as a coordination point for ATP. Residue Asp-137 is part of the active site.

It belongs to the GHMP kinase family. IspE subfamily.

It catalyses the reaction 4-CDP-2-C-methyl-D-erythritol + ATP = 4-CDP-2-C-methyl-D-erythritol 2-phosphate + ADP + H(+). Catalyzes the phosphorylation of the position 2 hydroxy group of 4-diphosphocytidyl-2C-methyl-D-erythritol. The chain is Putative 4-diphosphocytidyl-2-C-methyl-D-erythritol kinase from Streptococcus equi subsp. equi (strain 4047).